Here is a 593-residue protein sequence, read N- to C-terminus: Bifunctional purine biosynthesis protein ATIC (593 aa).

Positions 1–147 constitute an MGS-like domain; that stretch reads MAARQQLALL…KNHARVTVVC (147 aa). An IMP cyclohydrolase region spans residues 1–199; the sequence is MAARQQLALL…ISDYFRKEYS (199 aa). IMP is bound by residues 13 to 15, 35 to 38, 65 to 68, 102 to 103, and 126 to 127; these read SEK, SGGT, RVKT, CN, and DI. K138 serves as the catalytic Proton donor/acceptor; for FAICAR cyclization activity. K200 carries the post-translational modification N6-acetyllysine. Residues 200–593 form an AICAR formyltransferase region; sequence KGVSQLPLRY…IHTNLRLFHH (394 aa). 5-amino-1-(5-phospho-beta-D-ribosyl)imidazole-4-carboxamide-binding positions include 208–209, H268, G317, D340, N432, and R452; that span reads RY. H268 (proton acceptor; for AICAR formyltransferase activity) is an active-site residue. Residue I453 coordinates (6R)-10-formyltetrahydrofolate. Position 542 (F542) interacts with 5-amino-1-(5-phospho-beta-D-ribosyl)imidazole-4-carboxamide. (6R)-10-formyltetrahydrofolate is bound by residues D547 and 566–567; that span reads SA. R589 serves as a coordination point for 5-amino-1-(5-phospho-beta-D-ribosyl)imidazole-4-carboxamide.

Belongs to the PurH family. Homodimer. Associates with internalized INSR complexes on Golgi/endosomal membranes. Interacts with INSR; ATIC together with PRKAA2/AMPK2 and HACD3/PTPLAD1 is proposed to be part of a signaling network regulating INSR autophosphorylation and endocytosis.

It localises to the cytoplasm. It is found in the cytosol. It catalyses the reaction (6R)-10-formyltetrahydrofolate + 5-amino-1-(5-phospho-beta-D-ribosyl)imidazole-4-carboxamide = 5-formamido-1-(5-phospho-D-ribosyl)imidazole-4-carboxamide + (6S)-5,6,7,8-tetrahydrofolate. The enzyme catalyses 10-formyldihydrofolate + 5-amino-1-(5-phospho-beta-D-ribosyl)imidazole-4-carboxamide = 5-formamido-1-(5-phospho-D-ribosyl)imidazole-4-carboxamide + 7,8-dihydrofolate. The catalysed reaction is IMP + H2O = 5-formamido-1-(5-phospho-D-ribosyl)imidazole-4-carboxamide. It participates in purine metabolism; IMP biosynthesis via de novo pathway; 5-formamido-1-(5-phospho-D-ribosyl)imidazole-4-carboxamide from 5-amino-1-(5-phospho-D-ribosyl)imidazole-4-carboxamide (10-formyl THF route): step 1/1. It functions in the pathway purine metabolism; IMP biosynthesis via de novo pathway; IMP from 5-formamido-1-(5-phospho-D-ribosyl)imidazole-4-carboxamide: step 1/1. AMP and XMP inhibit AICAR formyltransferase activity. AICAR formyltransferase activity is competitively inhibited by 2-[5-hydroxy-3-methyl-1-(2-methyl-4-sulfo-phenyl)-1H-pyrazol-4-ylazo]-4-sulfo-benzoic acid (326203-A). FAICAR cyclization is competitively inhibited by 1,5-dihydroimidazo[4,5-c][1,2,6]thiadiazin-4(3H)-one-2,2-dioxide and the corresponding nucleoside and nucleoside monophosphate. Bifunctional enzyme that catalyzes the last two steps of purine biosynthesis. Acts as a transformylase that incorporates a formyl group to the AMP analog AICAR (5-amino-1-(5-phospho-beta-D-ribosyl)imidazole-4-carboxamide) to produce the intermediate formyl-AICAR (FAICAR). Can use both 10-formyldihydrofolate and 10-formyltetrahydrofolate as the formyl donor in this reaction. Also catalyzes the cyclization of FAICAR to inosine monophosphate (IMP). Promotes insulin receptor/INSR autophosphorylation and is involved in INSR internalization. This chain is Bifunctional purine biosynthesis protein ATIC (ATIC), found in Gallus gallus (Chicken).